Here is a 945-residue protein sequence, read N- to C-terminus: Isoleucine--tRNA ligase (945 aa).

Positions Pro-66–His-76 match the 'HIGH' region motif. Residue Glu-581 coordinates L-isoleucyl-5'-AMP. The 'KMSKS' region signature appears at Lys-622–Ser-626. Lys-625 serves as a coordination point for ATP. The Zn(2+) site is built by Cys-908, Cys-911, Cys-928, and Cys-931.

The protein belongs to the class-I aminoacyl-tRNA synthetase family. IleS type 1 subfamily. As to quaternary structure, monomer. Zn(2+) serves as cofactor.

It is found in the cytoplasm. It carries out the reaction tRNA(Ile) + L-isoleucine + ATP = L-isoleucyl-tRNA(Ile) + AMP + diphosphate. In terms of biological role, catalyzes the attachment of isoleucine to tRNA(Ile). As IleRS can inadvertently accommodate and process structurally similar amino acids such as valine, to avoid such errors it has two additional distinct tRNA(Ile)-dependent editing activities. One activity is designated as 'pretransfer' editing and involves the hydrolysis of activated Val-AMP. The other activity is designated 'posttransfer' editing and involves deacylation of mischarged Val-tRNA(Ile). The polypeptide is Isoleucine--tRNA ligase (Paraburkholderia phytofirmans (strain DSM 17436 / LMG 22146 / PsJN) (Burkholderia phytofirmans)).